A 153-amino-acid polypeptide reads, in one-letter code: Myoglobin (153 aa).

One can recognise a Globin domain in the interval 1 to 147; that stretch reads MATACVKSLE…FSDECLDHLK (147 aa). H94 provides a ligand contact to heme b.

It belongs to the globin family. In terms of assembly, homodimer; disulfide-linked. Post-translationally, the N-terminus is blocked. As to expression, body wall globin is localized in cellular compartments belonging to the hypodermis, the dorsal, ventral and lateral cords, the nerve ring, and body wall muscle.

The protein resides in the cytoplasm. Its function is as follows. High oxygen affinity. Probably supplies oxygen needed for muscle activity. The sequence is that of Myoglobin from Ascaris suum (Pig roundworm).